The following is a 157-amino-acid chain: Small ribosomal subunit protein uS7 (157 aa).

It belongs to the universal ribosomal protein uS7 family. In terms of assembly, part of the 30S ribosomal subunit. Contacts proteins S9 and S11.

In terms of biological role, one of the primary rRNA binding proteins, it binds directly to 16S rRNA where it nucleates assembly of the head domain of the 30S subunit. Is located at the subunit interface close to the decoding center, probably blocks exit of the E-site tRNA. This is Small ribosomal subunit protein uS7 from Borrelia garinii subsp. bavariensis (strain ATCC BAA-2496 / DSM 23469 / PBi) (Borreliella bavariensis).